Reading from the N-terminus, the 45-residue chain is Photosystem II reaction center protein K (45 aa).

A propeptide spanning residues 1-8 is cleaved from the precursor; the sequence is MEAALLLA. A helical membrane pass occupies residues 24–44; it reads LPIIPLFFLALAFVWQAAVGF.

It belongs to the PsbK family. As to quaternary structure, PSII is composed of 1 copy each of membrane proteins PsbA, PsbB, PsbC, PsbD, PsbE, PsbF, PsbH, PsbI, PsbJ, PsbK, PsbL, PsbM, PsbT, PsbX, PsbY, PsbZ, Psb30/Ycf12, peripheral proteins PsbO, CyanoQ (PsbQ), PsbU, PsbV and a large number of cofactors. It forms dimeric complexes.

The protein localises to the cellular thylakoid membrane. Functionally, one of the components of the core complex of photosystem II (PSII). PSII is a light-driven water:plastoquinone oxidoreductase that uses light energy to abstract electrons from H(2)O, generating O(2) and a proton gradient subsequently used for ATP formation. It consists of a core antenna complex that captures photons, and an electron transfer chain that converts photonic excitation into a charge separation. The sequence is that of Photosystem II reaction center protein K from Rippkaea orientalis (strain PCC 8801 / RF-1) (Cyanothece sp. (strain PCC 8801)).